We begin with the raw amino-acid sequence, 98 residues long: NADH-ubiquinone oxidoreductase chain 4L (98 aa).

3 helical membrane-spanning segments follow: residues 1–21 (MMSI…GVLI), 28–48 (STLL…ALLI), and 59–79 (APLV…ALLV).

It belongs to the complex I subunit 4L family. Core subunit of respiratory chain NADH dehydrogenase (Complex I) which is composed of 45 different subunits.

The protein localises to the mitochondrion inner membrane. The enzyme catalyses a ubiquinone + NADH + 5 H(+)(in) = a ubiquinol + NAD(+) + 4 H(+)(out). Functionally, core subunit of the mitochondrial membrane respiratory chain NADH dehydrogenase (Complex I) which catalyzes electron transfer from NADH through the respiratory chain, using ubiquinone as an electron acceptor. Part of the enzyme membrane arm which is embedded in the lipid bilayer and involved in proton translocation. The chain is NADH-ubiquinone oxidoreductase chain 4L (MT-ND4L) from Pseudocheirus peregrinus (Common ring-tailed possum).